The sequence spans 140 residues: Nucleoside diphosphate kinase (140 aa).

ATP-binding residues include Lys11, Phe59, Arg87, Thr93, Arg104, and Asn114. The active-site Pros-phosphohistidine intermediate is His117.

The protein belongs to the NDK family. As to quaternary structure, homotetramer. Mg(2+) serves as cofactor.

It is found in the cytoplasm. The enzyme catalyses a 2'-deoxyribonucleoside 5'-diphosphate + ATP = a 2'-deoxyribonucleoside 5'-triphosphate + ADP. It carries out the reaction a ribonucleoside 5'-diphosphate + ATP = a ribonucleoside 5'-triphosphate + ADP. Functionally, major role in the synthesis of nucleoside triphosphates other than ATP. The ATP gamma phosphate is transferred to the NDP beta phosphate via a ping-pong mechanism, using a phosphorylated active-site intermediate. The protein is Nucleoside diphosphate kinase of Francisella tularensis subsp. holarctica (strain LVS).